Consider the following 238-residue polypeptide: Purine nucleoside phosphorylase DeoD-type (238 aa).

H4 is an a purine D-ribonucleoside binding site. Phosphate-binding positions include G20, R24, R43, and 87-90 (RVGS). Residues 179–181 (EME) and 203–204 (SD) contribute to the a purine D-ribonucleoside site. D204 (proton donor) is an active-site residue.

Belongs to the PNP/UDP phosphorylase family. Homohexamer; trimer of homodimers.

The catalysed reaction is a purine D-ribonucleoside + phosphate = a purine nucleobase + alpha-D-ribose 1-phosphate. The enzyme catalyses a purine 2'-deoxy-D-ribonucleoside + phosphate = a purine nucleobase + 2-deoxy-alpha-D-ribose 1-phosphate. Catalyzes the reversible phosphorolytic breakdown of the N-glycosidic bond in the beta-(deoxy)ribonucleoside molecules, with the formation of the corresponding free purine bases and pentose-1-phosphate. This Haemophilus influenzae (strain 86-028NP) protein is Purine nucleoside phosphorylase DeoD-type.